Reading from the N-terminus, the 412-residue chain is F-box/WD repeat-containing protein 4 (412 aa).

The F-box domain occupies 25–71; the sequence is GPALWRLPEELLLLICSYLDMRALGRLAQVCRWLRRFTSCDLLWRRI. WD repeat units follow at residues 154-190, 193-229, 236-277, 283-321, 327-366, and 373-409; these read RPLG…IHKI, TFTV…VWPL, QCLH…IWDL, MTHL…YWDL, KCVM…LWDR, and HAFP…VLDF.

In terms of assembly, part of a SCF (SKP1-cullin-F-box) protein ligase complex. Interacts with POUF51. Expressed in brain, kidney, lung and liver.

Its function is as follows. Probably recognizes and binds to some phosphorylated proteins and promotes their ubiquitination and degradation. Likely to be involved in key signaling pathways crucial for normal limb development. May participate in Wnt signaling. In Homo sapiens (Human), this protein is F-box/WD repeat-containing protein 4 (FBXW4).